The chain runs to 442 residues: Histidine--tRNA ligase (442 aa).

This sequence belongs to the class-II aminoacyl-tRNA synthetase family. As to quaternary structure, homodimer.

Its subcellular location is the cytoplasm. It carries out the reaction tRNA(His) + L-histidine + ATP = L-histidyl-tRNA(His) + AMP + diphosphate + H(+). The sequence is that of Histidine--tRNA ligase from Helicobacter pylori (strain G27).